Here is a 46-residue protein sequence, read N- to C-terminus: Peroxidase 1 (46 aa).

This sequence belongs to the peroxidase family. Classical plant (class III) peroxidase subfamily. The cofactor is heme b. Ca(2+) serves as cofactor.

The protein resides in the secreted. The enzyme catalyses 2 a phenolic donor + H2O2 = 2 a phenolic radical donor + 2 H2O. Its function is as follows. Removal of H(2)O(2), oxidation of toxic reductants, biosynthesis and degradation of lignin, suberization, auxin catabolism, response to environmental stresses such as wounding, pathogen attack and oxidative stress. These functions might be dependent on each isozyme/isoform in each plant tissue. This Catharanthus roseus (Madagascar periwinkle) protein is Peroxidase 1.